We begin with the raw amino-acid sequence, 205 residues long: Probable GTP-binding protein EngB (205 aa).

The region spanning 22-194 is the EngB-type G domain; it reads ELPEIAFAGR…WESILDLCEI (173 aa). Residues 30 to 37, 57 to 61, 75 to 78, 142 to 145, and 173 to 175 each bind GTP; these read GRSNVGKS, GRTQL, DLPG, TKAD, and FSA. 2 residues coordinate Mg(2+): S37 and T59.

The protein belongs to the TRAFAC class TrmE-Era-EngA-EngB-Septin-like GTPase superfamily. EngB GTPase family. It depends on Mg(2+) as a cofactor.

In terms of biological role, necessary for normal cell division and for the maintenance of normal septation. This chain is Probable GTP-binding protein EngB, found in Desulfatibacillum aliphaticivorans.